Here is a 153-residue protein sequence, read N- to C-terminus: Superoxide dismutase [Cu-Zn] (153 aa).

His45, His47, and His62 together coordinate Cu cation. Cys56 and Cys145 are joined by a disulfide. 4 residues coordinate Zn(2+): His62, His70, His79, and Asp82. His119 is a binding site for Cu cation.

Belongs to the Cu-Zn superoxide dismutase family. Homodimer. The cofactor is Cu cation. Zn(2+) is required as a cofactor.

It is found in the cytoplasm. It carries out the reaction 2 superoxide + 2 H(+) = H2O2 + O2. Its function is as follows. Destroys radicals which are normally produced within the cells and which are toxic to biological systems. The polypeptide is Superoxide dismutase [Cu-Zn] (Ceratitis capitata (Mediterranean fruit fly)).